A 160-amino-acid polypeptide reads, in one-letter code: Ribosomal RNA large subunit methyltransferase H (160 aa).

Residues leucine 76 and glycine 108 each coordinate S-adenosyl-L-methionine.

This sequence belongs to the RNA methyltransferase RlmH family. Homodimer.

The protein resides in the cytoplasm. The enzyme catalyses pseudouridine(1915) in 23S rRNA + S-adenosyl-L-methionine = N(3)-methylpseudouridine(1915) in 23S rRNA + S-adenosyl-L-homocysteine + H(+). Its function is as follows. Specifically methylates the pseudouridine at position 1915 (m3Psi1915) in 23S rRNA. This is Ribosomal RNA large subunit methyltransferase H from Bradyrhizobium diazoefficiens (strain JCM 10833 / BCRC 13528 / IAM 13628 / NBRC 14792 / USDA 110).